A 562-amino-acid polypeptide reads, in one-letter code: Urease subunit alpha (562 aa).

The Urease domain maps to 131-562 (GGMDCHIHFI…LPMAQRYFLF (432 aa)). Residues H136, H138, and K219 each contribute to the Ni(2+) site. K219 carries the N6-carboxylysine modification. H221 contributes to the substrate binding site. Positions 248 and 274 each coordinate Ni(2+). H322 serves as the catalytic Proton donor. Residue D362 participates in Ni(2+) binding.

It belongs to the metallo-dependent hydrolases superfamily. Urease alpha subunit family. Heterotrimer of UreA (gamma), UreB (beta) and UreC (alpha) subunits. Three heterotrimers associate to form the active enzyme. It depends on Ni cation as a cofactor. Carboxylation allows a single lysine to coordinate two nickel ions.

It is found in the cytoplasm. The catalysed reaction is urea + 2 H2O + H(+) = hydrogencarbonate + 2 NH4(+). Its pathway is nitrogen metabolism; urea degradation; CO(2) and NH(3) from urea (urease route): step 1/1. This is Urease subunit alpha from Paracoccus denitrificans (strain Pd 1222).